A 4579-amino-acid polypeptide reads, in one-letter code: Sacsin (4579 aa).

Positions 9–84 (VPVTVLPGCV…FVNLQSKGLK (76 aa)) constitute a Ubiquitin-like domain. At Lys-943 the chain carries N6-acetyllysine. 2 positions are modified to phosphoserine: Ser-1779 and Ser-2511. At Thr-2516 the chain carries Phosphothreonine. Ser-3435 is subject to Phosphoserine. Disordered stretches follow at residues 4248-4273 (PEES…TPGL) and 4279-4298 (LFSG…PKKL). Positions 4254 to 4267 (SRDSAPSTPTSPTE) are enriched in polar residues. A Phosphothreonine modification is found at Thr-4261. Ser-4264 is subject to Phosphoserine. A compositionally biased stretch (basic residues) spans 4288 to 4298 (TSSKHQSPKKL). The region spanning 4306-4393 (ILKEVTSVVE…ASRFQSDKYS (88 aa)) is the J domain. The tract at residues 4405–4427 (ATSHKSERQQQNKEKCPPSAGQT) is disordered. Residues 4406 to 4420 (TSHKSERQQQNKEKC) show a composition bias toward basic and acidic residues. The HEPN domain maps to 4451 to 4567 (LRQARANFSA…MRVMECTACI (117 aa)).

As to expression, highly expressed in the central nervous system. Also found in skeletal muscle and at low levels in pancreas.

The protein resides in the cytoplasm. Its function is as follows. Co-chaperone which acts as a regulator of the Hsp70 chaperone machinery and may be involved in the processing of other ataxia-linked proteins. This Homo sapiens (Human) protein is Sacsin (SACS).